The chain runs to 133 residues: Small ribosomal subunit protein uS8 (133 aa).

It belongs to the universal ribosomal protein uS8 family. Part of the 30S ribosomal subunit. Contacts proteins S5 and S12.

Its function is as follows. One of the primary rRNA binding proteins, it binds directly to 16S rRNA central domain where it helps coordinate assembly of the platform of the 30S subunit. The polypeptide is Small ribosomal subunit protein uS8 (Deinococcus radiodurans (strain ATCC 13939 / DSM 20539 / JCM 16871 / CCUG 27074 / LMG 4051 / NBRC 15346 / NCIMB 9279 / VKM B-1422 / R1)).